Consider the following 58-residue polypeptide: Cecropin-B (58 aa).

Positions 1 to 21 are cleaved as a signal peptide; it reads ILSFVFACLLALSAVSAAPEP.

Belongs to the cecropin family.

The protein localises to the secreted. Functionally, cecropins have lytic and antibacterial activity against several Gram-positive and Gram-negative bacteria. In Spodoptera litura (Asian cotton leafworm), this protein is Cecropin-B (CECB).